The following is a 92-amino-acid chain: DNA-directed RNA polymerase subunit omega (92 aa).

The protein belongs to the RNA polymerase subunit omega family. The RNAP catalytic core consists of 2 alpha, 1 beta, 1 beta' and 1 omega subunit. When a sigma factor is associated with the core the holoenzyme is formed, which can initiate transcription.

The enzyme catalyses RNA(n) + a ribonucleoside 5'-triphosphate = RNA(n+1) + diphosphate. In terms of biological role, promotes RNA polymerase assembly. Latches the N- and C-terminal regions of the beta' subunit thereby facilitating its interaction with the beta and alpha subunits. In Shewanella amazonensis (strain ATCC BAA-1098 / SB2B), this protein is DNA-directed RNA polymerase subunit omega.